Consider the following 222-residue polypeptide: Putative thymidylate synthase (222 aa).

Residue C139 is part of the active site.

The protein belongs to the thymidylate synthase family. Archaeal-type ThyA subfamily. Monomer.

Its subcellular location is the cytoplasm. It participates in pyrimidine metabolism; dTTP biosynthesis. May catalyze the biosynthesis of dTMP using an unknown cosubstrate. This is Putative thymidylate synthase from Methanocaldococcus jannaschii (strain ATCC 43067 / DSM 2661 / JAL-1 / JCM 10045 / NBRC 100440) (Methanococcus jannaschii).